The sequence spans 1406 residues: Enhancer of mRNA-decapping protein 4 (1406 aa).

Residue Ala-2 is modified to N-acetylalanine. Residues Ser-3 and Ser-6 each carry the phosphoserine modification. Position 125 is an N6-acetyllysine (Lys-125). 4 WD repeats span residues 174–214 (GFTG…GKIQ), 230–277 (NHFR…SSHN), 295–334 (GHST…QDEP), and 342–393 (PHDG…CLQT). Residues Ser-560, Ser-565, Ser-583, and Ser-585 each carry the phosphoserine modification. Disordered regions lie at residues 604–631 (SLQQ…SSSS) and 667–686 (SLTL…SLLP). Over residues 609–631 (SASPSSSSSSSSSSSSSSSSSSS) the composition is skewed to low complexity. Ser-680, Ser-712, Ser-727, and Ser-729 each carry phosphoserine. A disordered region spans residues 719-744 (EPLGLPQASPSRTRSPDVISSASTAL). Polar residues predominate over residues 726–744 (ASPSRTRSPDVISSASTAL). Thr-731 bears the Phosphothreonine mark. Ser-733 and Ser-745 each carry phosphoserine. Disordered regions lie at residues 782–855 (HLLS…NGLQ) and 873–951 (QRDS…VAEP). Polar residues-rich tracts occupy residues 823–832 (EVATPDSQVW) and 841–852 (ETCSTLTESPRN). The residue at position 826 (Thr-826) is a Phosphothreonine. Residues Ser-849 and Ser-876 each carry the phosphoserine modification. Thr-879 carries the post-translational modification Phosphothreonine. 5 positions are modified to phosphoserine: Ser-880, Ser-884, Ser-892, Ser-895, and Ser-897. At Thr-906 the chain carries Phosphothreonine. Residues 971–1030 (HNQEELLQRLCAQLEGLQSTVTDHVERALETRHEQEQRRLERALAEGQQRGGQLQEQLTQ) are a coiled coil. At Ser-1385 the chain carries Phosphoserine.

This sequence belongs to the WD repeat EDC4 family. As to quaternary structure, part of a decapping complex consisting of DCP1A, DCP2, EDC3, EDC4 and probably DDX6. Part of a complex consisting of DCP1A, EDC3, EDC4 and DDX6. Part of a complex consisting of DCP1B, EDC3, EDC4 and DDX6. Interacts with DCP2. Interacts with RC3H1. Interacts with NBDY. Interacts with Tex19.1 and, probably, Tex19.2. Interacts with LSM14A. Interacts with DDX6.

The protein resides in the cytoplasm. It is found in the P-body. It localises to the nucleus. Its function is as follows. In the process of mRNA degradation, seems to play a role in mRNA decapping. Component of a complex containing DCP2 and DCP1A which functions in decapping of ARE-containing mRNAs. Promotes complex formation between DCP1A and DCP2. Enhances the catalytic activity of DCP2 (in vitro). In Mus musculus (Mouse), this protein is Enhancer of mRNA-decapping protein 4.